The following is a 468-amino-acid chain: 3-isopropylmalate dehydratase large subunit (468 aa).

Residues C345, C405, and C408 each coordinate [4Fe-4S] cluster.

The protein belongs to the aconitase/IPM isomerase family. LeuC type 1 subfamily. As to quaternary structure, heterodimer of LeuC and LeuD. Requires [4Fe-4S] cluster as cofactor.

The catalysed reaction is (2R,3S)-3-isopropylmalate = (2S)-2-isopropylmalate. Its pathway is amino-acid biosynthesis; L-leucine biosynthesis; L-leucine from 3-methyl-2-oxobutanoate: step 2/4. Its function is as follows. Catalyzes the isomerization between 2-isopropylmalate and 3-isopropylmalate, via the formation of 2-isopropylmaleate. The polypeptide is 3-isopropylmalate dehydratase large subunit (Oceanobacillus iheyensis (strain DSM 14371 / CIP 107618 / JCM 11309 / KCTC 3954 / HTE831)).